Reading from the N-terminus, the 445-residue chain is MSTILESLPTGQKVGIAFSGGLDTSAALHWMKLKGAVPYAYTANLGQPDEDDYDAIPKRAIEYGAAGARLIDCRAQLVAEGIAALQSGAFHITTAGVTYFNTTPIGRAVTGTMLVAAMKEDGVNIWGDGSTYKGNDIERFYRYGLLVNPDLKIYKPWLDQTFIDELGGRAEMSEFMNQAGFAYKMSAEKAYSTDSNLLGATHEAKDLESLESGIKIVNPIMGVAFWRDDVKIAAEEVTVRFEAGQPVALNGVEFKDPVELLLEANRIGGRHGLGMSDQIENRIIEAKSRGIYEAPGLALLYIAYERLVTGIHNEDTIEQYRENGRRLGRLLYQGRWFDPQAIMLRETAQRWVARAITGEVKIELRRGNDYSILSTKSPNLTYQPERLSMEKVASTFSPRDRIGQLTMRNLDITDTRDKLRVYSQVGLLTPGESSALPQIKGDDGK.

ATP is bound by residues 17–25 (AFSGGLDTS) and A43. Y99 provides a ligand contact to L-citrulline. G129 and T131 together coordinate ATP. 3 residues coordinate L-aspartate: T131, N135, and D136. Residue N135 participates in L-citrulline binding. Position 136 (D136) interacts with ATP. Residues R139 and S192 each coordinate L-citrulline. D194 serves as a coordination point for ATP. Residues T201, E203, and E280 each contribute to the L-citrulline site.

Belongs to the argininosuccinate synthase family. Type 2 subfamily. In terms of assembly, homotetramer.

It localises to the cytoplasm. The catalysed reaction is L-citrulline + L-aspartate + ATP = 2-(N(omega)-L-arginino)succinate + AMP + diphosphate + H(+). The protein operates within amino-acid biosynthesis; L-arginine biosynthesis; L-arginine from L-ornithine and carbamoyl phosphate: step 2/3. The protein is Argininosuccinate synthase of Burkholderia ambifaria (strain MC40-6).